A 588-amino-acid polypeptide reads, in one-letter code: Adenine deaminase (588 aa).

It belongs to the metallo-dependent hydrolases superfamily. Adenine deaminase family. As to quaternary structure, homodimer. Requires Mn(2+) as cofactor.

It carries out the reaction adenine + H2O + H(+) = hypoxanthine + NH4(+). The protein is Adenine deaminase of Escherichia coli O17:K52:H18 (strain UMN026 / ExPEC).